A 213-amino-acid polypeptide reads, in one-letter code: Embryo-specific protein ATS3 (213 aa).

The first 21 residues, 1–21, serve as a signal peptide directing secretion; sequence MTFPSLSVSFLFFAFIFVTHA. In terms of domain architecture, PLAT spans 34–148; that stretch reads CPYTVVVMTS…LNTWYGHNNC (115 aa). A disordered region spans residues 147 to 188; sequence NCNTTGRPSSPDLPPPHFPPEFPPETPTTPPPPPPRPSAASR. Residue Asn-149 is glycosylated (N-linked (GlcNAc...) asparagine). Positions 157–183 are enriched in pro residues; sequence PDLPPPHFPPEFPPETPTTPPPPPPRP.

As to expression, expressed in seeds. Expression is restricted to the developing embryo.

It localises to the secreted. Functionally, may play a role during embryo development. The polypeptide is Embryo-specific protein ATS3 (Arabidopsis thaliana (Mouse-ear cress)).